A 159-amino-acid chain; its full sequence is MSTKAIYPGTFDPITNGHIDIVTRAASMFDKVVLAIAASPSKKPMFSLDERIALAEQATAHLVNVEVIGFSDLMANFARAQQANILIRGLRAVADFEYEMQLAHMNRHLMPTLESVFLMPCKEWSFISSSLVKEVARHQGDVSHFLPANVHQALLNKLK.

T10 is a binding site for substrate. ATP-binding positions include 10–11 (TF) and H18. Positions 42, 74, and 88 each coordinate substrate. ATP is bound by residues 89–91 (GLR), E99, and 124–130 (WSFISSS).

It belongs to the bacterial CoaD family. Homohexamer. The cofactor is Mg(2+).

The protein localises to the cytoplasm. It carries out the reaction (R)-4'-phosphopantetheine + ATP + H(+) = 3'-dephospho-CoA + diphosphate. Its pathway is cofactor biosynthesis; coenzyme A biosynthesis; CoA from (R)-pantothenate: step 4/5. In terms of biological role, reversibly transfers an adenylyl group from ATP to 4'-phosphopantetheine, yielding dephospho-CoA (dPCoA) and pyrophosphate. The chain is Phosphopantetheine adenylyltransferase from Klebsiella pneumoniae subsp. pneumoniae (strain ATCC 700721 / MGH 78578).